Here is a 260-residue protein sequence, read N- to C-terminus: Snake venom serine protease homolog (260 aa).

Positions 1–18 (MVLVRVLANLLMLQLSYA) are cleaved as a signal peptide. The propeptide occupies 19–24 (QKSSEL). In terms of domain architecture, Peptidase S1 spans 25–251 (IIGGDECNIN…HLDWIKSIIA (227 aa)). 6 disulfides stabilise this stretch: Cys-31–Cys-165, Cys-52–Cys-68, Cys-100–Cys-258, Cys-144–Cys-212, Cys-176–Cys-191, and Cys-202–Cys-227. Asp-112 serves as the catalytic Charge relay system. Residues Asn-123 and Asn-124 are each glycosylated (N-linked (GlcNAc...) asparagine). Catalysis depends on Ser-206, which acts as the Charge relay system.

It belongs to the peptidase S1 family. Snake venom subfamily. Expressed by the venom gland.

It localises to the secreted. Functionally, snake venom serine protease homolog. May act in the hemostasis system of the prey. The polypeptide is Snake venom serine protease homolog (Protobothrops jerdonii (Jerdon's pitviper)).